The chain runs to 507 residues: ATP synthase subunit alpha, chloroplastic (507 aa).

170–177 (GDRQTGKT) lines the ATP pocket.

This sequence belongs to the ATPase alpha/beta chains family. As to quaternary structure, F-type ATPases have 2 components, CF(1) - the catalytic core - and CF(0) - the membrane proton channel. CF(1) has five subunits: alpha(3), beta(3), gamma(1), delta(1), epsilon(1). CF(0) has four main subunits: a, b, b' and c.

The protein localises to the plastid. It is found in the chloroplast thylakoid membrane. The catalysed reaction is ATP + H2O + 4 H(+)(in) = ADP + phosphate + 5 H(+)(out). Produces ATP from ADP in the presence of a proton gradient across the membrane. The alpha chain is a regulatory subunit. The polypeptide is ATP synthase subunit alpha, chloroplastic (Gossypium hirsutum (Upland cotton)).